A 1161-amino-acid chain; its full sequence is Hamartin (1161 aa).

Lys-30 is covalently cross-linked (Glycyl lysine isopeptide (Lys-Gly) (interchain with G-Cter in ubiquitin)). Disordered regions lie at residues 296-336 (PYVD…PSTR) and 353-591 (CGMT…QRGV). The segment covering 303–336 (SYGGSTSTPSSSSRLMLFSPPGQLPQSLSSPSTR) has biased composition (low complexity). A compositionally biased stretch (pro residues) spans 393-402 (TSPPPAPPCP). The interval 403-784 (QDDCVHGSAA…QIRQLQHDRE (382 aa)) is mediates interaction with WDR45B. Over residues 471-484 (EKDKEEAAISKELS) the composition is skewed to basic and acidic residues. Ser-484, Ser-502, Ser-508, Ser-518, Ser-592, and Ser-595 each carry phosphoserine. The span at 509–529 (LSGSQRKTHSAASGTQGSSVN) shows a compositional bias: polar residues. Coiled-coil stretches lie at residues 721–849 (IRAA…NRQL), 879–917 (TAYR…AKKD), and 967–991 (EKDG…ERLD). 2 disordered regions span residues 1003–1077 (GHNE…SLPS) and 1092–1161 (NKSE…PEHS). The span at 1004 to 1017 (HNEEASGHNGETRT) shows a compositional bias: basic and acidic residues. Low complexity predominate over residues 1026–1043 (SCGGRVTGGSSSSSSELS). A compositionally biased stretch (polar residues) spans 1064 to 1077 (PSSSIPTTVGSLPS). Ser-1094 carries the post-translational modification Phosphoserine. The span at 1103–1113 (VTMSSSSLSET) shows a compositional bias: low complexity. 2 stretches are compositionally biased toward basic and acidic residues: residues 1114–1124 (LKTELGKDSGT) and 1152–1161 (DYNETHPEHS).

Component of the TSC-TBC complex (also named Rhebulator complex), composed of 2 molecules of TSC1, 2 molecules of TSC2 and 1 molecule of TBC1D7. Probably forms a complex composed of chaperones HSP90 and HSP70, co-chaperones STIP1/HOP, CDC37, PPP5C, PTGES3/p23, TSC1 and client protein TSC2. Forms a complex composed of chaperones HSP90 and HSP70, co-chaperones CDC37, PPP5C, TSC1 and client protein TSC2, CDK4, AKT, RAF1 and NR3C1; this complex does not contain co-chaperones STIP1/HOP and PTGES3/p23. Forms a complex containing HSP90AA1, TSC1 and TSC2; TSC1 is required to recruit TCS2 to the complex. Interacts (via C-terminus) with the closed form of HSP90AA1 (via the middle domain and TPR repeat-binding motif). Interacts with DOCK7. Interacts with FBXW5. Interacts with WDR45B. Interacts with RPAP3 and URI1. In terms of processing, phosphorylation at Ser-502 does not affect interaction with TSC2. Post-translationally, 'Lys-63'-linked ubiquitinated at Lys-30 by PELI1; the ubiquitination promotes TSC1/TSC2 complex stability.

The protein localises to the lysosome membrane. It localises to the cytoplasm. It is found in the cytosol. Functionally, non-catalytic component of the TSC-TBC complex, a multiprotein complex that acts as a negative regulator of the canonical mTORC1 complex, an evolutionarily conserved central nutrient sensor that stimulates anabolic reactions and macromolecule biosynthesis to promote cellular biomass generation and growth. The TSC-TBC complex acts as a GTPase-activating protein (GAP) for the small GTPase RHEB, a direct activator of the protein kinase activity of mTORC1. In absence of nutrients, the TSC-TBC complex inhibits mTORC1, thereby preventing phosphorylation of ribosomal protein S6 kinase (RPS6KB1 and RPS6KB2) and EIF4EBP1 (4E-BP1) by the mTORC1 signaling. The TSC-TBC complex is inactivated in response to nutrients, relieving inhibition of mTORC1. Within the TSC-TBC complex, TSC1 stabilizes TSC2 and prevents TSC2 self-aggregation. Involved in microtubule-mediated protein transport via its ability to regulate mTORC1 signaling. Also acts as a co-chaperone for HSP90AA1 facilitating HSP90AA1 chaperoning of protein clients such as kinases, TSC2 and glucocorticoid receptor NR3C1. Increases ATP binding to HSP90AA1 and inhibits HSP90AA1 ATPase activity. Competes with the activating co-chaperone AHSA1 for binding to HSP90AA1, thereby providing a reciprocal regulatory mechanism for chaperoning of client proteins. Recruits TSC2 to HSP90AA1 and stabilizes TSC2 by preventing the interaction between TSC2 and ubiquitin ligase HERC1. The sequence is that of Hamartin from Mus musculus (Mouse).